The following is a 385-amino-acid chain: Heterogeneous nuclear ribonucleoprotein 87F (385 aa).

RRM domains follow at residues 24 to 101 and 115 to 192; these read RKLF…RAVP and KKLF…KAIA. 2 disordered regions span residues 192–289 and 305–385; these read AKQD…WNGG and GNGG…NRRY. Composition is skewed to gly residues over residues 199 to 289 and 305 to 317; these read QGGG…WNGG and GNGG…GGFG. The span at 319–336 shows a compositional bias: polar residues; it reads EYQQSYGGGPQRNSNFGN. Composition is skewed to gly residues over residues 344 to 362 and 369 to 385; these read QGGG…GQGF and TGGG…NRRY.

The protein resides in the nucleus. The protein localises to the cytoplasm. In terms of biological role, this protein is a component of ribonucleosomes. Could be needed to organize a concentration gradient of a dorsalizing morphogen (Dm) originating in the germinal vesicle. This chain is Heterogeneous nuclear ribonucleoprotein 87F (Hrb87F), found in Drosophila melanogaster (Fruit fly).